We begin with the raw amino-acid sequence, 453 residues long: Putative receptor-like protein kinase At2g30940 (453 aa).

A helical transmembrane segment spans residues 60–80 (ASASIAFLLVLIISVLLCFIF). Residue Thr155 is modified to Phosphothreonine. In terms of domain architecture, Protein kinase spans 166 to 428 (FADDNVITKG…IHMLQPHDLL (263 aa)). Residues 172 to 180 (ITKGDSSTV) and Lys194 each bind ATP. Residue Tyr240 is modified to Phosphotyrosine. Asp293 serves as the catalytic Proton acceptor. Residue Ser297 is modified to Phosphoserine. Thr322 is subject to Phosphothreonine.

Belongs to the protein kinase superfamily.

It localises to the cell membrane. The enzyme catalyses L-seryl-[protein] + ATP = O-phospho-L-seryl-[protein] + ADP + H(+). It carries out the reaction L-threonyl-[protein] + ATP = O-phospho-L-threonyl-[protein] + ADP + H(+). The sequence is that of Putative receptor-like protein kinase At2g30940 from Arabidopsis thaliana (Mouse-ear cress).